A 359-amino-acid polypeptide reads, in one-letter code: MAGPPGDDIFRATLAAVAPGTPFRDGLERILRGHTGALIVLGHDKVVEGLCTGGFELDVEFSATRLRELAKMDGAIVLSSDLQRIVRAAVHLVPDPTVPTEESGTRHRTAERVAKQAEFPVISVSQSMHIIALYVAGRRYVLDGSAAILSRANQALATLERYKLRLDEVAGTLSALEIEDLVTVRDAISVSQRLEMVRRIADEIEGYVVELGTDGRLLSLQLEELMAGVETERELTVRDYLPIGSKAGTPAQVLGELSAMSPTDLLDLTVLARVIGFSGGADILDRQISPRGYRMLAKVPRLPRMVVDRLVDHFGTLQKLLAAGVDDLQAVDGVGETRARAVREGLSRLAESSILERYV.

Residues 7-146 (DDIFRATLAA…GRRYVLDGSA (140 aa)) enclose the DAC domain. Residues Gly74, Leu92, and 105–109 (TRHRT) contribute to the ATP site.

It belongs to the DisA family. In terms of assembly, homooctamer. The cofactor is Mg(2+).

It catalyses the reaction 2 ATP = 3',3'-c-di-AMP + 2 diphosphate. In terms of biological role, participates in a DNA-damage check-point that is active prior to asymmetric division when DNA is damaged. DisA forms globular foci that rapidly scan along the chromosomes during sporulation, searching for lesions. When a lesion is present, DisA pauses at the lesion site. This triggers a cellular response that culminates in a temporary block in sporulation initiation. Also has diadenylate cyclase activity, catalyzing the condensation of 2 ATP molecules into cyclic di-AMP (c-di-AMP). c-di-AMP acts as a signaling molecule that couples DNA integrity with progression of sporulation. The rise in c-di-AMP level generated by DisA while scanning the chromosome, operates as a positive signal that advances sporulation; upon encountering a lesion, the DisA focus arrests at the damaged site and halts c-di-AMP synthesis. This is DNA integrity scanning protein DisA from Frankia casuarinae (strain DSM 45818 / CECT 9043 / HFP020203 / CcI3).